The primary structure comprises 493 residues: Acetyl-coenzyme A carboxylase carboxyl transferase subunit beta (493 aa).

Positions 231–493 (LWVQCENCYG…FKLHAFFPLN (263 aa)) constitute a CoA carboxyltransferase N-terminal domain. Zn(2+) contacts are provided by Cys-235, Cys-238, Cys-254, and Cys-257. The C4-type zinc finger occupies 235–257 (CENCYGLNYKKFLKSKINLCEQC).

This sequence belongs to the AccD/PCCB family. In terms of assembly, acetyl-CoA carboxylase is a heterohexamer composed of biotin carboxyl carrier protein, biotin carboxylase and 2 subunits each of ACCase subunit alpha and ACCase plastid-coded subunit beta (accD). Zn(2+) serves as cofactor.

The protein localises to the plastid stroma. It catalyses the reaction N(6)-carboxybiotinyl-L-lysyl-[protein] + acetyl-CoA = N(6)-biotinyl-L-lysyl-[protein] + malonyl-CoA. It participates in lipid metabolism; malonyl-CoA biosynthesis; malonyl-CoA from acetyl-CoA: step 1/1. Functionally, component of the acetyl coenzyme A carboxylase (ACC) complex. Biotin carboxylase (BC) catalyzes the carboxylation of biotin on its carrier protein (BCCP) and then the CO(2) group is transferred by the transcarboxylase to acetyl-CoA to form malonyl-CoA. In Epifagus virginiana (Beechdrops), this protein is Acetyl-coenzyme A carboxylase carboxyl transferase subunit beta.